The following is a 93-amino-acid chain: Large ribosomal subunit protein uL23 (93 aa).

It belongs to the universal ribosomal protein uL23 family. Part of the 50S ribosomal subunit. Contacts protein L29, and trigger factor when it is bound to the ribosome.

Its function is as follows. One of the early assembly proteins it binds 23S rRNA. One of the proteins that surrounds the polypeptide exit tunnel on the outside of the ribosome. Forms the main docking site for trigger factor binding to the ribosome. This Campylobacter fetus subsp. fetus (strain 82-40) protein is Large ribosomal subunit protein uL23.